The chain runs to 957 residues: UvrABC system protein A (957 aa).

ATP is bound at residue 33–40 (GLSGSGKS). A C4-type zinc finger spans residues 252-279 (CPHCGFSIGELEPRLFSFNSPFGACPTC). 2 consecutive ABC transporter domains span residues 309–587 (WTPI…PNSL) and 607–935 (PDGR…RYLK). ATP is bound at residue 639–646 (GVSGSGKS). The C4-type zinc finger occupies 738–764 (CEACRGDGIIKIEMHFLPDVYVPCEVC).

This sequence belongs to the ABC transporter superfamily. UvrA family. As to quaternary structure, forms a heterotetramer with UvrB during the search for lesions.

Its subcellular location is the cytoplasm. In terms of biological role, the UvrABC repair system catalyzes the recognition and processing of DNA lesions. UvrA is an ATPase and a DNA-binding protein. A damage recognition complex composed of 2 UvrA and 2 UvrB subunits scans DNA for abnormalities. When the presence of a lesion has been verified by UvrB, the UvrA molecules dissociate. The sequence is that of UvrABC system protein A from Bacillus subtilis (strain 168).